A 155-amino-acid chain; its full sequence is Protein E6 (155 aa).

2 zinc fingers span residues 39 to 75 and 112 to 148; these read CNFC…CRCC and CQNC…CRLC.

It belongs to the papillomaviridae E6 protein family. In terms of assembly, forms homodimers. Interacts with ubiquitin-protein ligase UBE3A/E6-AP; this interaction stimulates UBE3A ubiquitin activity. Interacts with host BAK1.

It is found in the host cytoplasm. The protein localises to the host nucleus. Its function is as follows. Plays a major role in the induction and maintenance of cellular transformation. E6 associates with host UBE3A/E6-AP ubiquitin-protein ligase and modulates its activity. Protects host keratinocytes from apoptosis by mediating the degradation of host BAK1. May also inhibit host immune response. In Homo sapiens (Human), this protein is Protein E6.